Reading from the N-terminus, the 466-residue chain is Ras GTPase-activating protein-binding protein 1 (466 aa).

The region spanning 11 to 133 (VGREFVRQYY…FYVHNDIFRY (123 aa)) is the NTF2 domain. Residues Lys-36, Lys-50, Lys-59, Lys-64, Lys-76, and Lys-123 each participate in a glycyl lysine isopeptide (Lys-Gly) (interchain with G-Cter in ubiquitin) cross-link. An acidic disordered region region spans residues 142–225 (VTEPQEESEE…EPVLEETVPE (84 aa)). Position 143 is a phosphothreonine (Thr-143). Disordered stretches follow at residues 144–172 (EPQE…DSGT) and 184–243 (EEHL…QTVQ). 2 stretches are compositionally biased toward acidic residues: residues 145 to 157 (PQEE…EEPE) and 185 to 206 (EHLE…EQEP). Ser-149 carries the phosphoserine modification. Phosphoserine occurs at positions 231, 232, 250, and 253. The tract at residues 255 to 329 (TSKNLPPSGA…REAGEQGDIE (75 aa)) is disordered. 2 stretches are compositionally biased toward basic and acidic residues: residues 297–307 (PQRDQRVREQR) and 318–329 (PIREAGEQGDIE). In terms of domain architecture, RRM spans 340-415 (HQLFIGNLPH…VRLNVEEKKT (76 aa)). Glycyl lysine isopeptide (Lys-Gly) (interchain with G-Cter in ubiquitin) cross-links involve residues Lys-353 and Lys-357. Ser-373 is modified (phosphoserine). Lys-376 is covalently cross-linked (Glycyl lysine isopeptide (Lys-Gly) (interchain with G-Cter in ubiquitin)). Lys-376 is subject to N6-acetyllysine; alternate. Lys-376 participates in a covalent cross-link: Glycyl lysine isopeptide (Lys-Gly) (interchain with G-Cter in SUMO2); alternate. Lys-393 participates in a covalent cross-link: Glycyl lysine isopeptide (Lys-Gly) (interchain with G-Cter in ubiquitin); alternate. Residues 410–466 (VEEKKTRAAREGDRRDNRLRGPGGPRGGLGGGMRGPPRGGMVQKPGFGVGRGLAPRQ) are RG-rich region. A compositionally biased stretch (basic and acidic residues) spans 413–428 (KKTRAAREGDRRDNRL). Positions 413 to 466 (KKTRAAREGDRRDNRLRGPGGPRGGLGGGMRGPPRGGMVQKPGFGVGRGLAPRQ) are disordered. Arg-429 bears the Asymmetric dimethylarginine mark. The span at 430-447 (GPGGPRGGLGGGMRGPPR) shows a compositional bias: gly residues. Position 435 is an asymmetric dimethylarginine; alternate (Arg-435). Omega-N-methylarginine; alternate occurs at positions 435, 447, 460, and 465. Arg-460 bears the Dimethylated arginine; alternate mark.

Homodimer and oligomer. Component of a TAU mRNP complex, at least composed of IGF2BP1, ELAVL4 and G3BP1. Binds to the SH3 domain of Ras GTPase-activating protein (RASA1) in proliferating cells. No interaction in quiescent cells. Interacts (via NTF2 domain) with USP10; inhibiting stress granule formation by lowering G3BP1 valence. Interacts (via NTF2 domain) with CAPRIN1; promoting stress granule formation by lowering the saturation-concentration of G3BP1. Interacts (via NTF2 domain) with UBAP2L; promoting stress granule formation. Associates (via RG-rich region) with 40S ribosome subunits. Interacts with RPTOR and SPAG5; this complex is increased by oxidative stress. Interacts with ATXN2L. Interacts with STYXL1. Interacts with CGAS (via N-terminus); this interaction promotes the DNA-binding and activation of CGAS. Interacts (via C-terminus) with RIGI. Interacts with PABPC1. Interacts with QKI (isoforms QKI6 and QKI7); directing N(7)-methylguanine-containing mRNAs to stress granules. Mg(2+) serves as cofactor. Phosphorylation of the acidic disordered region regulates stress granule assembly. RASA1-dependent phosphorylation of Ser-149 induces a conformational change that prevents self-association. Dephosphorylation after HRAS activation is required for stress granule assembly. Ser-149 phosphorylation induces partial nuclear localization. Post-translationally, arg-435 is dimethylated, probably to asymmetric dimethylarginine. In terms of processing, ubiquitinated by TRIM21 via 'Lys-63'-linked polyubiquitination in the NTF2 domain in response to heat shock, leading to stress granule disassembly: ubiquitination promotes interaction with the FAF2 adapter, followed by interaction with VCP, which extracts G3BP1 from stress granules, leading to stress granule disassembly. In case of prolonged stress, ubiquitination by TRIM21 leads to autophagy-dependent degradation of G3BP1 via recruitment of ubiquitinated G3BP1 by SQSTM1 and/or CALCOCO2 to autophagosomes.

The protein localises to the cytoplasm. The protein resides in the cytosol. It localises to the perikaryon. Its subcellular location is the stress granule. It is found in the nucleus. The enzyme catalyses ATP + H2O = ADP + phosphate + H(+). With respect to regulation, under physiological conditions, G3BP1 adopts a compact state that is stabilized by intramolecular interactions between the RG-rich and the acidic regions that inhibit phase separation. Upon stress, polysomes disassemble and mRNAs are released in an unfolded protein-free state. Binding of unfolded mRNA to G3BP1 outcompetes the intramolecular interactions and RNA-bound G3BP1 adopts an expanded conformation in which the RG-rich region becomes exposed to engage in protein-protein and protein-RNA interactions, allowing physical cross-linking of RNA molecules to form protein-RNA condensates, leading to liquid-liquid phase separation (LLPS). Its function is as follows. Protein involved in various processes, such as stress granule formation and innate immunity. Plays an essential role in stress granule formation. Stress granules are membraneless compartments that store mRNAs and proteins, such as stalled translation pre-initiation complexes, in response to stress. Promotes formation of stress granules phase-separated membraneless compartment by undergoing liquid-liquid phase separation (LLPS) upon unfolded RNA-binding: functions as a molecular switch that triggers RNA-dependent LLPS in response to a rise in intracellular free RNA concentrations. Also acts as an ATP- and magnesium-dependent helicase: unwinds DNA/DNA, RNA/DNA, and RNA/RNA substrates with comparable efficiency. Acts unidirectionally by moving in the 5' to 3' direction along the bound single-stranded DNA. Unwinds preferentially partial DNA and RNA duplexes having a 17 bp annealed portion and either a hanging 3' tail or hanging tails at both 5'- and 3'-ends. Plays an essential role in innate immunity by promoting CGAS and RIGI activity. Participates in the DNA-triggered cGAS/STING pathway by promoting the DNA binding and activation of CGAS. Triggers the condensation of cGAS, a process probably linked to the formation of membrane-less organelles. Also enhances RIGI-induced type I interferon production probably by helping RIGI at sensing pathogenic RNA. May also act as a phosphorylation-dependent sequence-specific endoribonuclease in vitro: Cleaves exclusively between cytosine and adenine and cleaves MYC mRNA preferentially at the 3'-UTR. The protein is Ras GTPase-activating protein-binding protein 1 (G3BP1) of Pongo abelii (Sumatran orangutan).